The following is a 230-amino-acid chain: Spliceosome-associated protein CWC15 homolog (230 aa).

Disordered stretches follow at residues 1–157 (MTTA…EEKQ) and 164–183 (AGNP…GGDF). Over residues 25-34 (KLSNQYSSKD) the composition is skewed to polar residues. 2 coiled-coil regions span residues 47-82 (GQET…SASS) and 119-164 (DSDE…NILA). Positions 52-78 (ADLRKKDLRRELEDKERNAIREKRARD) are enriched in basic and acidic residues. A compositionally biased stretch (acidic residues) spans 104–125 (DADEAVDELNSSDDDDSDEDDT). Residues 131 to 157 (ELEKIKKERAEEKAARDEEIKEKEEKQ) show a composition bias toward basic and acidic residues.

The protein belongs to the CWC15 family. As to quaternary structure, component of spliceosomal complex.

Its subcellular location is the nucleus. Functionally, component of a spliceosomal complex that is required for activating pre-mRNA splicing. In Caenorhabditis elegans, this protein is Spliceosome-associated protein CWC15 homolog.